The following is a 705-amino-acid chain: MKLILCTVLSLGIAAVCFAAPPKSVIRWCTISSPEEKKCNNLRDLTQQERISLTCVQKATYLDCIKAIANNEADAISLDGGQAFEAGLAPYKLKPIAAEVYEHTEGSTTSYYAVAVVKKGTEFTVNDLQGKTSCHTGLGRSAGWNIPIGTLLHRGAIEWEGIESGSVEQAVAKFFSASCVPGATIEQKLCRQCKGDPKTKCARNAPYSGYSGAFHCLKDGKGDVAFVKHTTVNENAPDQKDEYELLCLDGSRQPVDNYKTCNWARVAAHAVVARDDNKVEDIWSFLSKAQSDFGVDTKSDFHLFGPPGKKDPVLKDLLFKDSAIMLKRVPSLMDSQLYLGFEYYSAIQSMRKDQLTPSPRENRIQWCAVGKDEKSKCDRWSVVSNGDVECTVVDETKDCIIKIMKGEADAVALDGGLVYTAGVCGLVPVMAERYDDESQCSKTDERPASYFAVAVARKDSNVNWNNLKGKKSCHTAVGRTAGWVIPMGLIHNRTGTCNFDEYFSEGCAPGSPPNSRLCQLCQGSGGIPPEKCVASSHEKYFGYTGALRCLVEKGDVAFIQHSTVEENTGGKNKADWAKNLQMDDFELLCTDGRRANVMDYRECNLAEVPTHAVVVRPEKANKIRDLLERQEKRFGVNGSEKSKFMMFESQNKDLLFKDLTKCLFKVREGTTYKEFLGDKFYTVISSLKTCNPSDILQMCSFLEGK.

The first 19 residues, 1–19 (MKLILCTVLSLGIAAVCFA), serve as a signal peptide directing secretion. Transferrin-like domains are found at residues 26-352 (IRWC…SMRK) and 364-689 (IQWC…SLKT). 2 disulfide bridges follow: C29/C64 and C39/C55. Fe(3+) contacts are provided by D79 and Y111. Intrachain disulfides connect C134-C216, C179-C193, C190-C201, and C247-C261. The hydrogencarbonate site is built by T136, R140, A142, and G143. Fe(3+) is bound at residue Y210. Residue H269 coordinates Fe(3+). Residues 352–360 (KDQLTPSPR) are connecting region. 2 disulfide bridges follow: C367/C399 and C377/C390. Fe(3+)-binding residues include D414 and Y450. Cystine bridges form between C424-C699, C440-C662, C473-C549, C497-C690, C507-C521, C518-C532, and C589-C603. The hydrogencarbonate site is built by T475, R479, A481, and G482. N492 carries an N-linked (GlcNAc...) asparagine glycan. Y543 provides a ligand contact to Fe(3+). Fe(3+) is bound at residue H611.

Belongs to the transferrin family. Monomer. In terms of processing, different forms of hen transferrin are distinguished by their carbohydrate composition. Ovotransferrin and embryo serum transferrin but not adult serum transferrin, have bisecting N-acetylglucosamine. Transferrin secreted by embryo hepatocytes in primary culture is marked by the presence of (alpha1-6) fucosylation of the core N-acetylglucosamine. Serum transferrins also differ in the number of attached neuraminic acid residues. In both embryo forms, sialylation occurs on the Man (alpha 1-3)-linked antennae. As to expression, expressed in the magnum of the oviduct (at protein level).

It is found in the secreted. Its function is as follows. Transferrins are iron binding transport proteins which can bind two Fe(3+) ions in association with the binding of an anion, usually bicarbonate. Responsible for the transport of iron from sites of absorption and heme degradation to those of storage and utilization. There are two forms of hen transferrin, ovotransferrin, found in the ovoducts and, serum transferrin, secreted by the liver. Serum transferrin may also have a role in stimulating cell proliferation and is regulated by iron levels. Ovotransferrin has a bacteriostatic function and, is not controlled by iron levels. The protein is Ovotransferrin of Gallus gallus (Chicken).